A 441-amino-acid polypeptide reads, in one-letter code: Protein translocase subunit SecY (441 aa).

10 helical membrane passes run 25-45 (YFVIFSLIVFRMGSYIPIPGI), 78-98 (IFALGIMPFISSSIIVQILTL), 126-146 (LILAALQSFGMSISLPNIPGL), 155-175 (ISFYGIAIISLITGTIFLMWL), 184-204 (IGNGISIIIFSGIVSGLPSSF), 218-238 (VLLFCFIGIVIFLVTLLVVYI), 275-295 (VIPAIFASSIVLFPATIASWF), 318-338 (YILTYITAIIFFCFFYTGLAF), 376-396 (FLGSMYMAFICLVPELMRFFM), and 398-418 (VPFYFGGTSLLIIVVVIIDFI).

It belongs to the SecY/SEC61-alpha family. As to quaternary structure, component of the Sec protein translocase complex. Heterotrimer consisting of SecY, SecE and SecG subunits. The heterotrimers can form oligomers, although 1 heterotrimer is thought to be able to translocate proteins. Interacts with the ribosome. Interacts with SecDF, and other proteins may be involved. Interacts with SecA.

The protein resides in the cell membrane. Its function is as follows. The central subunit of the protein translocation channel SecYEG. Consists of two halves formed by TMs 1-5 and 6-10. These two domains form a lateral gate at the front which open onto the bilayer between TMs 2 and 7, and are clamped together by SecE at the back. The channel is closed by both a pore ring composed of hydrophobic SecY resides and a short helix (helix 2A) on the extracellular side of the membrane which forms a plug. The plug probably moves laterally to allow the channel to open. The ring and the pore may move independently. The protein is Protein translocase subunit SecY of Buchnera aphidicola subsp. Baizongia pistaciae (strain Bp).